A 107-amino-acid polypeptide reads, in one-letter code: V-type proton ATPase subunit G (107 aa).

Belongs to the V-ATPase G subunit family. In terms of assembly, V-ATPase is a heteromultimeric enzyme composed of a peripheral catalytic V1 complex (components A to H) attached to an integral membrane V0 proton pore complex (components: a, c, c', c'' and d).

In terms of biological role, catalytic subunit of the peripheral V1 complex of vacuolar ATPase (V-ATPase). V-ATPase is responsible for acidifying a variety of intracellular compartments in eukaryotic cells. This is V-type proton ATPase subunit G (atp6v1g) from Dictyostelium discoideum (Social amoeba).